The chain runs to 478 residues: Lysosome membrane protein 2 (478 aa).

Residues 1–4 (MGRC) are Cytoplasmic-facing. The helical transmembrane segment at 5–27 (CFYTAGTLSLLLLVTSVTLLVAR) threads the bilayer. The Lumenal segment spans residues 28–433 (VFQKAVDQTI…QLKSVINTTL (406 aa)). Asn45, Asn68, Asn105, and Asn122 each carry an N-linked (GlcNAc...) asparagine glycan. The interval 155–191 (LIEAMLKAYQQKLFVIHTVHELLWGYKDEILSLVHIF) is important for interaction with GBA1. Asn206, Asn224, Asn249, and Asn304 each carry an N-linked (GlcNAc...) asparagine glycan. Cystine bridges form between Cys274-Cys329 and Cys312-Cys318. Residues Asn325, Asn412, and Asn430 are each glycosylated (N-linked (GlcNAc...) asparagine). The chain crosses the membrane as a helical span at residues 434–459 (VVTNIPYIIMALGVFFGLVFTWLACR). The Cytoplasmic segment spans residues 460-478 (GQGSMDEGTADERAPLIRT).

Belongs to the CD36 family. In terms of assembly, interacts with GBA1. Acylated by palmitic acid group(s). Post-translationally, heavily glycosylated. Detected in the extracts of brain, heart, lung, liver and kidney.

It is found in the lysosome membrane. Acts as a lysosomal receptor for glucosylceramidase (GBA1) targeting. The chain is Lysosome membrane protein 2 (Scarb2) from Mus musculus (Mouse).